A 385-amino-acid polypeptide reads, in one-letter code: Mannitol-1-phosphate 5-dehydrogenase (385 aa).

NAD(+) is bound at residue 3–14 (AVHFGAGNIGRG).

It belongs to the mannitol dehydrogenase family.

It carries out the reaction D-mannitol 1-phosphate + NAD(+) = beta-D-fructose 6-phosphate + NADH + H(+). This is Mannitol-1-phosphate 5-dehydrogenase from Geobacillus thermodenitrificans (strain NG80-2).